Consider the following 719-residue polypeptide: Serine/threonine-protein kinase CBK1 (719 aa).

2 disordered regions span residues 1-75 (MFGQ…GAGF) and 100-219 (MQQQ…QTSG). Residues 24–38 (QFSSAYMEQQGSHQS) are compositionally biased toward polar residues. Residues 40-63 (QEHLAYEQLQLQQQQQQQQQHAAA) show a composition bias toward low complexity. 3 stretches are compositionally biased toward polar residues: residues 112–130 (ATSI…NDTT), 139–157 (GHYS…SSAY), and 181–219 (GDQT…QTSG). A Protein kinase domain is found at 310 to 631 (FHTVKVIGKG…ANEIKNHPFF (322 aa)). Residues 316 to 324 (IGKGAFGEV) and lysine 339 contribute to the ATP site. Aspartate 433 functions as the Proton acceptor in the catalytic mechanism. Positions 632-717 (RGVDWETIRQ…SRFDYLTRKN (86 aa)) constitute an AGC-kinase C-terminal domain.

This sequence belongs to the protein kinase superfamily. STE Ser/Thr protein kinase family. COT1 subfamily.

The enzyme catalyses L-seryl-[protein] + ATP = O-phospho-L-seryl-[protein] + ADP + H(+). It carries out the reaction L-threonyl-[protein] + ATP = O-phospho-L-threonyl-[protein] + ADP + H(+). Protein kinase that seems to play a role in the regulation of cell morphogenesis and proliferation. The protein is Serine/threonine-protein kinase CBK1 (CBK1) of Eremothecium gossypii (strain ATCC 10895 / CBS 109.51 / FGSC 9923 / NRRL Y-1056) (Yeast).